A 151-amino-acid chain; its full sequence is Large ribosomal subunit protein uL13 (151 aa).

Belongs to the universal ribosomal protein uL13 family. In terms of assembly, part of the 50S ribosomal subunit.

In terms of biological role, this protein is one of the early assembly proteins of the 50S ribosomal subunit, although it is not seen to bind rRNA by itself. It is important during the early stages of 50S assembly. This is Large ribosomal subunit protein uL13 from Synechococcus sp. (strain JA-2-3B'a(2-13)) (Cyanobacteria bacterium Yellowstone B-Prime).